The chain runs to 284 residues: Four and a half LIM domains protein 5 (284 aa).

The segment at 8 to 32 adopts a C4-type zinc-finger fold; that stretch reads CQYCTSSLIGKKYVLKDDNLYCISC. LIM zinc-binding domains are found at residues 39–100, 101–160, and 161–220; these read NYCE…ECSS, KCFH…KEFA, and HYCN…LYAK.

In terms of assembly, interacts with CREM (via the third LIM domain). Interacts (via second LIM domain) with SPAG8. As to expression, testis-specific, temporal expression is coordinated with CREM.

It localises to the nucleus. Its function is as follows. May be involved in the regulation of spermatogenesis. Stimulates CREM transcriptional activity in a phosphorylation-independent manner. This is Four and a half LIM domains protein 5 (Fhl5) from Mus musculus (Mouse).